The sequence spans 631 residues: Dolichyl-diphosphooligosaccharide--protein glycosyltransferase subunit 2 (631 aa).

The first 22 residues, 1–22, serve as a signal peptide directing secretion; it reads MAPPGSSAVFLLALTITASVQA. Over 23–540 the chain is Lumenal; sequence LTPTHYLTKQ…REPEKRPPTV (518 aa). The N-linked (GlcNAc...) asparagine glycan is linked to Asn-106. Lys-154 is covalently cross-linked (Glycyl lysine isopeptide (Lys-Gly) (interchain with G-Cter in ubiquitin)). The helical transmembrane segment at 541–561 threads the bilayer; sequence VSNTFTALILSPLLLLFALWI. The Cytoplasmic portion of the chain corresponds to 562–571; it reads RIGANVSNFT. The chain crosses the membrane as a helical span at residues 572-592; the sequence is FAPSTVIFHLGHAAMLGLMYI. Topologically, residues 593-596 are lumenal; the sequence is YWTQ. The helical transmembrane segment at 597–617 threads the bilayer; sequence LNMFQTLKYLAVLGTVTFLAG. The Cytoplasmic portion of the chain corresponds to 618-631; sequence NRMLAQHAVKRTAH.

It belongs to the SWP1 family. Component of the oligosaccharyltransferase (OST) complex. OST exists in two different complex forms which contain common core subunits RPN1, RPN2, OST48, OST4, DAD1 and TMEM258, either STT3A or STT3B as catalytic subunits, and form-specific accessory subunits. STT3A complex assembly occurs through the formation of 3 subcomplexes. Subcomplex 1 contains RPN1 and TMEM258, subcomplex 2 contains the STT3A-specific subunits STT3A, DC2/OSTC, and KCP2 as well as the core subunit OST4, and subcomplex 3 contains RPN2, DAD1, and OST48. The STT3A complex can form stable complexes with the Sec61 complex or with both the Sec61 and TRAP complexes. Interacts with DDI2. Interacts with TMEM35A/NACHO.

Its subcellular location is the endoplasmic reticulum. The protein localises to the endoplasmic reticulum membrane. It functions in the pathway protein modification; protein glycosylation. In terms of biological role, subunit of the oligosaccharyl transferase (OST) complex that catalyzes the initial transfer of a defined glycan (Glc(3)Man(9)GlcNAc(2) in eukaryotes) from the lipid carrier dolichol-pyrophosphate to an asparagine residue within an Asn-X-Ser/Thr consensus motif in nascent polypeptide chains, the first step in protein N-glycosylation. N-glycosylation occurs cotranslationally and the complex associates with the Sec61 complex at the channel-forming translocon complex that mediates protein translocation across the endoplasmic reticulum (ER). All subunits are required for a maximal enzyme activity. The polypeptide is Dolichyl-diphosphooligosaccharide--protein glycosyltransferase subunit 2 (Mus musculus (Mouse)).